The chain runs to 143 residues: Large ribosomal subunit protein uL13 (143 aa).

It belongs to the universal ribosomal protein uL13 family. In terms of assembly, part of the 50S ribosomal subunit.

In terms of biological role, this protein is one of the early assembly proteins of the 50S ribosomal subunit, although it is not seen to bind rRNA by itself. It is important during the early stages of 50S assembly. This Desulfitobacterium hafniense (strain DSM 10664 / DCB-2) protein is Large ribosomal subunit protein uL13.